The sequence spans 876 residues: Phosphoenolpyruvate carboxylase (876 aa).

Residues H138 and K543 contribute to the active site.

It belongs to the PEPCase type 1 family. Mg(2+) is required as a cofactor.

The enzyme catalyses oxaloacetate + phosphate = phosphoenolpyruvate + hydrogencarbonate. Functionally, forms oxaloacetate, a four-carbon dicarboxylic acid source for the tricarboxylic acid cycle. This is Phosphoenolpyruvate carboxylase from Pseudomonas fluorescens (strain Pf0-1).